The sequence spans 111 residues: Nucleoid-associated protein Teth39_2199 (111 aa).

Belongs to the YbaB/EbfC family. Homodimer.

It is found in the cytoplasm. The protein resides in the nucleoid. In terms of biological role, binds to DNA and alters its conformation. May be involved in regulation of gene expression, nucleoid organization and DNA protection. In Thermoanaerobacter pseudethanolicus (strain ATCC 33223 / 39E) (Clostridium thermohydrosulfuricum), this protein is Nucleoid-associated protein Teth39_2199.